A 259-amino-acid chain; its full sequence is Polycomb group RING finger protein 1 (259 aa).

The RING-type zinc-finger motif lies at 45–84 (CYLCAGYFIDATTITECLHTFCKSCIVKYLQTSKYCPLCN).

In terms of assembly, component of a PRC1-like complex.

It localises to the nucleus. Functionally, component of a Polycomb group (PcG) multiprotein PRC1-like complex, a complex class required to maintain the transcriptionally repressive state of many genes, including Hox genes, throughout development. PcG PRC1 complex acts via chromatin remodeling and modification of histones; it mediates monoubiquitination of histone H2A 'Lys-119', rendering chromatin heritably changed in its expressibility. The protein is Polycomb group RING finger protein 1 (pcgf1) of Xenopus laevis (African clawed frog).